The following is a 198-amino-acid chain: Recombination protein RecR (198 aa).

Residues 58–73 form a C4-type zinc finger; that stretch reads CSVCGNFTDKDPCAIC. Positions 81–175 constitute a Toprim domain; that stretch reads SIICVIEQPK…KVTRIAHGVP (95 aa).

This sequence belongs to the RecR family.

Functionally, may play a role in DNA repair. It seems to be involved in an RecBC-independent recombinational process of DNA repair. It may act with RecF and RecO. This chain is Recombination protein RecR, found in Clostridium botulinum (strain ATCC 19397 / Type A).